The primary structure comprises 367 residues: tRNA/tmRNA (uracil-C(5))-methyltransferase (367 aa).

Positions 189, 217, 222, 238, and 298 each coordinate S-adenosyl-L-methionine. C323 (nucleophile) is an active-site residue. E357 functions as the Proton acceptor in the catalytic mechanism.

The protein belongs to the class I-like SAM-binding methyltransferase superfamily. RNA M5U methyltransferase family. TrmA subfamily.

It carries out the reaction uridine(54) in tRNA + S-adenosyl-L-methionine = 5-methyluridine(54) in tRNA + S-adenosyl-L-homocysteine + H(+). The enzyme catalyses uridine(341) in tmRNA + S-adenosyl-L-methionine = 5-methyluridine(341) in tmRNA + S-adenosyl-L-homocysteine + H(+). Its function is as follows. Dual-specificity methyltransferase that catalyzes the formation of 5-methyluridine at position 54 (m5U54) in all tRNAs, and that of position 341 (m5U341) in tmRNA (transfer-mRNA). This Pseudoalteromonas translucida (strain TAC 125) protein is tRNA/tmRNA (uracil-C(5))-methyltransferase.